We begin with the raw amino-acid sequence, 316 residues long: 4-diphosphocytidyl-2-C-methyl-D-erythritol kinase (316 aa).

The active site involves Lys-32. Residue 126-136 coordinates ATP; the sequence is PVGAGLGGGSA. Residue Asp-168 is part of the active site.

Belongs to the GHMP kinase family. IspE subfamily.

It catalyses the reaction 4-CDP-2-C-methyl-D-erythritol + ATP = 4-CDP-2-C-methyl-D-erythritol 2-phosphate + ADP + H(+). The protein operates within isoprenoid biosynthesis; isopentenyl diphosphate biosynthesis via DXP pathway; isopentenyl diphosphate from 1-deoxy-D-xylulose 5-phosphate: step 3/6. Its function is as follows. Catalyzes the phosphorylation of the position 2 hydroxy group of 4-diphosphocytidyl-2C-methyl-D-erythritol. This is 4-diphosphocytidyl-2-C-methyl-D-erythritol kinase from Bifidobacterium longum (strain DJO10A).